A 418-amino-acid chain; its full sequence is MPMLLPHPHQHFLKGLLRAPFRCYHFIFHSSTHLGSGIPCAQPFNSLGLHCTKWMLLSDGLKRKLCVQTTLKDHTEGLSDKEQRFVDKLYTGLIQGQRACLAEAITLVESTHSRKKELAQVLLQKVLLYHREQEQSNKGKPLAFRVGLSGPPGAGKSTFIEYFGKMLTERGHKLSVLAVDPSSCTSGGSLLGDKTRMTELSRDMNAYIRPSPTRGTLGGVTRTTNEAILLCEGAGYDIILIETVGVGQSEFAVADMVDMFVLLLPPAGGDELQGIKRGIIEMADLVAVTKSDGDLIVPARRIQAEYVSALKLLRKRSQVWKPKVIRISARSGEGISEMWDKMKDFQDLMLASGELTAKRRKQQKVWMWNLIQESVLEHFRTHPTVREQIPLLEQKVLIGALSPGLAADFLLKAFKSRD.

The N-terminal 65 residues, 1 to 65 (MPMLLPHPHQ…LLSDGLKRKL (65 aa)), are a transit peptide targeting the mitochondrion. Residues 150–158 (GPPGAGKST), D292, and 328–330 (SAR) contribute to the GTP site.

The protein belongs to the SIMIBI class G3E GTPase family. ArgK/MeaB subfamily. In terms of assembly, homodimer. Interacts with MMUT (the apoenzyme form); the interaction is GTP dependent. Widely expressed. Highest expression is observed in liver and skeletal muscle.

The protein localises to the mitochondrion. The protein resides in the cytoplasm. The catalysed reaction is GTP + H2O = GDP + phosphate + H(+). With respect to regulation, GTPase activity is stimulated by MMUT. Functionally, GTPase, binds and hydrolyzes GTP. Involved in intracellular vitamin B12 metabolism, mediates the transport of cobalamin (Cbl) into mitochondria for the final steps of adenosylcobalamin (AdoCbl) synthesis. Functions as a G-protein chaperone that assists AdoCbl cofactor delivery from MMAB to the methylmalonyl-CoA mutase (MMUT). Plays a dual role as both a protectase and a reactivase for MMUT. Protects MMUT from progressive inactivation by oxidation by decreasing the rate of the formation of the oxidized inactive cofactor hydroxocobalamin (OH2Cbl). Additionally acts a reactivase by promoting the replacement of OH2Cbl by the active cofactor AdoCbl, restoring the activity of MMUT in the presence and hydrolysis of GTP. The protein is Methylmalonic aciduria type A protein, mitochondrial of Homo sapiens (Human).